Consider the following 293-residue polypeptide: MALRLDGKALAKAVESRLQAQIESNLPQAGRPPGLAVLRVGDDPASAVYVANKEKACARIGVASYGAHLPSSTPFAEVLSTIQQLNADPRVDGILLQLPLPEGLDEGPLLMAIDPEKDADGLHTLNLGRLLKGEQGPRSCTPAGVMAMLRSQGIDPAGQRAVVIGRSILVGQPMALMLQAANATVTVVHSRTKDLVAHTREADIVVVAAGRPGMVGAEHIKPGAAVVDVGIHRKPEGGLCGDVRAAEVEPIAAALSPVPGGVGPMTVTMLLVNTVVAWCRRHGVDHDLADLLS.

NADP(+)-binding positions include 165–167, Ser-190, and Ile-231; that span reads GRS.

Belongs to the tetrahydrofolate dehydrogenase/cyclohydrolase family. As to quaternary structure, homodimer.

The catalysed reaction is (6R)-5,10-methylene-5,6,7,8-tetrahydrofolate + NADP(+) = (6R)-5,10-methenyltetrahydrofolate + NADPH. The enzyme catalyses (6R)-5,10-methenyltetrahydrofolate + H2O = (6R)-10-formyltetrahydrofolate + H(+). The protein operates within one-carbon metabolism; tetrahydrofolate interconversion. Functionally, catalyzes the oxidation of 5,10-methylenetetrahydrofolate to 5,10-methenyltetrahydrofolate and then the hydrolysis of 5,10-methenyltetrahydrofolate to 10-formyltetrahydrofolate. The chain is Bifunctional protein FolD from Synechococcus sp. (strain CC9902).